The primary structure comprises 506 residues: Nondiscriminating glutamyl-tRNA synthetase EARS2, mitochondrial (506 aa).

A mitochondrion-targeting transit peptide spans 1–41; the sequence is MAALLRRLLQRGRPLAASGRRVGRREARLGTGPGVAVRVRF. An L-glutamate-binding site is contributed by 40 to 42; it reads RFA. The 'HIGH' region motif lies at 45–53; the sequence is PTGFLHLGG. His50 serves as a coordination point for ATP. L-glutamate contacts are provided by residues Glu76, 228-232, and Arg246; that span reads YHLAC. Glu249 contacts ATP. The residue at position 256 (Lys256) is an N6-succinyllysine. 284-288 serves as a coordination point for ATP; sequence KLSKR. Residues 284–288 carry the 'KMSKS' region motif; that stretch reads KLSKR. At Lys486 the chain carries N6-acetyllysine.

It belongs to the class-I aminoacyl-tRNA synthetase family. Glutamate--tRNA ligase type 1 subfamily.

The protein localises to the mitochondrion matrix. It carries out the reaction tRNA(Glx) + L-glutamate + ATP = L-glutamyl-tRNA(Glx) + AMP + diphosphate. It catalyses the reaction tRNA(Glu) + L-glutamate + ATP = L-glutamyl-tRNA(Glu) + AMP + diphosphate. The enzyme catalyses tRNA(Gln) + L-glutamate + ATP = L-glutamyl-tRNA(Gln) + AMP + diphosphate. Its function is as follows. Non-discriminating glutamyl-tRNA synthetase that catalyzes aminoacylation of both mitochondrial tRNA(Glu) and tRNA(Gln) and participates in RNA aminoacylation for mitochondrial protein translation. Attachs glutamate to tRNA(Glu) or tRNA(Gln) in a two-step reaction: glutamate is first activated by ATP to form Glu-AMP and then transferred to the acceptor end of tRNA(Glu) or tRNA(Gln). In vitro, cytoplasmic tRNA(Gln) is slightly glutamylated, but with low activity. In Macaca fascicularis (Crab-eating macaque), this protein is Nondiscriminating glutamyl-tRNA synthetase EARS2, mitochondrial.